The primary structure comprises 279 residues: Nitrate import permease protein NrtB (279 aa).

5 helical membrane-spanning segments follow: residues 25 to 45, 91 to 111, 149 to 169, 200 to 220, and 249 to 269; these read FLPY…ISAI, VAIG…VLGM, AIFV…AVGI, VPYV…AIVA, and IILA…LVAW. The ABC transmembrane type-1 domain occupies 84-267; sequence ILISLQRVAI…LVGLSLDRLV (184 aa).

Belongs to the binding-protein-dependent transport system permease family. CysTW subfamily. In terms of assembly, the complex is composed of two ATP-binding proteins (NrtC and NrtD), two transmembrane proteins (NrtB) and a solute-binding protein (NrtA).

It is found in the cell inner membrane. Part of the ABC transporter complex NrtABCD involved in nitrate uptake. The complex is probably also involved in nitrite transport. Probably responsible for the translocation of the substrate across the membrane. The sequence is that of Nitrate import permease protein NrtB from Synechococcus elongatus (strain ATCC 33912 / PCC 7942 / FACHB-805) (Anacystis nidulans R2).